The primary structure comprises 856 residues: Wall-associated receptor kinase 17 (856 aa).

The N-terminal stretch at 1 to 42 (MPSRSPACRPRGRNRRSAADAVARPLALALILVSTLPRAAHS) is a signal peptide. N-linked (GlcNAc...) asparagine glycosylation is found at Asn171 and Asn234. Positions 297–334 (FEKLCKYGTCVDAPTGAGYLCKCPSGYDGNPYVSDGCQ) constitute an EGF-like 1 domain. 5 disulfide bridges follow: Cys301–Cys306, Cys319–Cys333, Cys339–Cys353, Cys347–Cys362, and Cys364–Cys379. Residues 335 to 380 (DINECRNYNSNNCTYQNLCNNTLGGYTCSCPENNIGDGYRTGTGCN) enclose the EGF-like 2; calcium-binding domain. N-linked (GlcNAc...) asparagine glycosylation is found at Asn346 and Asn354. Residue Asn380 is glycosylated (N-linked (GlcNAc...) asparagine). The chain crosses the membrane as a helical span at residues 452–470 (VLGVSLVLMVTTTTAASCY). Residues 527–805 (YSESRILGRG…VLQELRRSFT (279 aa)) form the Protein kinase domain. Residues 533–541 (LGRGGQGTV) and Lys555 contribute to the ATP site. Asp652 serves as the catalytic Proton acceptor. The segment at 816 to 844 (SIQENSEQEEKHLHESRSIPSLQSSEVST) is disordered. Residues 823–832 (QEEKHLHESR) show a composition bias toward basic and acidic residues. Residues 833–844 (SIPSLQSSEVST) are compositionally biased toward polar residues.

Belongs to the protein kinase superfamily. Ser/Thr protein kinase family. As to quaternary structure, interacts with WAK17 isoform 2; the interaction is direct. Interacts with LRR5; the interaction is direct. In terms of assembly, interacts with WAK17 isoform 1; the interaction is direct. (Microbial infection) Interacts with G.zeae CFEM1 (via CFEM domain); the interaction is direct. Interacts with G.zeae CFEMN1; the interaction is direct. Interacts with G.zeae CFEM5; the interaction is direct. Mn(2+) is required as a cofactor. Mg(2+) serves as cofactor.

Its subcellular location is the cell membrane. The catalysed reaction is L-seryl-[protein] + ATP = O-phospho-L-seryl-[protein] + ADP + H(+). It carries out the reaction L-threonyl-[protein] + ATP = O-phospho-L-threonyl-[protein] + ADP + H(+). In terms of biological role, kinase that contributes to activation of the hypersensitive response, a form of programmed cell death, upon fungal infection. Functionally, secreted protein that contributes to activation of the hypersensitive response, a form of programmed cell death, upon fungal infection. May sense the presence of fungal material and relay the signal to WAK17 isoform 1. This is Wall-associated receptor kinase 17 from Zea mays (Maize).